Here is a 31-residue protein sequence, read N- to C-terminus: Cliotide T10 (31 aa).

The segment at residues 1–31 (GIPCGESCVYIPCTVTALLGCSCKDKVCYKN) is a cross-link (cyclopeptide (Gly-Asn)). Intrachain disulfides connect Cys4/Cys21, Cys8/Cys23, and Cys13/Cys28.

Post-translationally, contains 3 disulfide bonds. This is a cyclic peptide. In terms of tissue distribution, expressed in seed, root and nodule but not in flower, stem, shoot, leaf and pod (at protein level).

In terms of biological role, probably participates in a plant defense mechanism. The protein is Cliotide T10 of Clitoria ternatea (Butterfly pea).